The sequence spans 333 residues: Probable malate dehydrogenase 3 (333 aa).

Residue 12–18 (GAAGQIA) coordinates NAD(+). The substrate site is built by R93 and R99. NAD(+)-binding positions include N106, Q113, and 130–132 (VGN). Substrate contacts are provided by N132 and R163. The active-site Proton acceptor is the H188.

It belongs to the LDH/MDH superfamily. MDH type 2 family. As to quaternary structure, homodimer.

The catalysed reaction is (S)-malate + NAD(+) = oxaloacetate + NADH + H(+). Functionally, catalyzes the reversible oxidation of malate to oxaloacetate. This Dictyostelium discoideum (Social amoeba) protein is Probable malate dehydrogenase 3 (mdhC).